The sequence spans 551 residues: Podocalyxin (551 aa).

The N-terminal stretch at 1 to 21 (MRSALALAALLLLLLSPPSLS) is a signal peptide. The segment at 18-324 (PSLSQEKSPQ…QRVSCGPPER (307 aa)) is disordered. The Extracellular segment spans residues 22-452 (QEKSPQPGPT…PPEETEDRFS (431 aa)). The span at 32–59 (PMATSTSTRPAPASAPAPKSSVAASVPA) shows a compositional bias: low complexity. The span at 60–90 (EQNTTPMTTKAPATQSPSASPGSSVENSAPA) shows a compositional bias: polar residues. Residues 91 to 104 (QGSTTTQQSLSVTT) are compositionally biased toward low complexity. Over residues 142 to 164 (APSNHSITTKPLATEATSQAPRQ) the composition is skewed to polar residues. Residues Asn145 and Asn180 are each glycosylated (N-linked (GlcNAc...) asparagine). Positions 234-244 (PVASSAETQGM) are enriched in polar residues. Residues 289-300 (TSSSTELASTAL) are compositionally biased toward low complexity. The N-linked (GlcNAc...) asparagine glycan is linked to Asn333. The chain crosses the membrane as a helical span at residues 453-473 (LPLIITIVCMASFLLLVAALY). At 474–551 (GCCHQRLSHR…DLDEEEDTHL (78 aa)) the chain is on the cytoplasmic side. Thr511 is subject to Phosphothreonine. Position 530 is a phosphoserine (Ser530). Thr549 carries the post-translational modification Phosphothreonine.

This sequence belongs to the podocalyxin family. As to quaternary structure, monomer; when associated with the membrane raft. Oligomer; when integrated in the apical membrane. Found in a complex with EZR, PODXL and NHERF2. Associates with the actin cytoskeleton through complex formation with EZR and NHERF2. Interacts (via the C-terminal PDZ-binding motif DTHL) with NHERF1 (via the PDZ domains); interaction is not detected in glomerular epithelium cells, take place early in the secretory pathway and is necessary for its apical membrane sorting. Interacts (via the C-terminal PDZ-binding motif DTHL) with NHERF2 (via the PDZ 1 domain); interaction is detected in glomerular epithelium cells. Interacts with EZR. In terms of processing, N- and O-linked glycosylated. Sialoglycoprotein. In terms of tissue distribution, glomerular epithelium cell (podocyte) and endothelial cells.

It localises to the apical cell membrane. The protein localises to the cell projection. It is found in the microvillus. Its subcellular location is the membrane raft. The protein resides in the lamellipodium. It localises to the filopodium. The protein localises to the ruffle. It is found in the membrane. Involved in the regulation of both adhesion and cell morphology and cancer progression. Functions as an anti-adhesive molecule that maintains an open filtration pathway between neighboring foot processes in the podocyte by charge repulsion. Acts as a pro-adhesive molecule, enhancing the adherence of cells to immobilized ligands, increasing the rate of migration and cell-cell contacts in an integrin-dependent manner. Induces the formation of apical actin-dependent microvilli. Involved in the formation of a preapical plasma membrane subdomain to set up initial epithelial polarization and the apical lumen formation during renal tubulogenesis. Plays a role in cancer development and aggressiveness by inducing cell migration and invasion through its interaction with the actin-binding protein EZR. Affects EZR-dependent signaling events, leading to increased activities of the MAPK and PI3K pathways in cancer cells. In Oryctolagus cuniculus (Rabbit), this protein is Podocalyxin (PODXL).